The primary structure comprises 150 residues: 16.6 kDa heat shock protein (150 aa).

Positions 31–150 (AERCPVLTNV…PQLKAIPISG (120 aa)) constitute a sHSP domain.

It belongs to the small heat shock protein (HSP20) family. May form oligomeric structures.

The protein resides in the cytoplasm. This is 16.6 kDa heat shock protein (HSP16.6) from Oryza sativa subsp. japonica (Rice).